The sequence spans 188 residues: NAD(P)H-quinone oxidoreductase subunit J (188 aa).

A compositionally biased stretch (polar residues) spans 1–12 (MSETPSKQTAAS). Positions 1 to 23 (MSETPSKQTAASDETGAVVAPEP) are disordered.

It belongs to the complex I 30 kDa subunit family. NDH-1 can be composed of about 15 different subunits; different subcomplexes with different compositions have been identified which probably have different functions.

The protein localises to the cellular thylakoid membrane. The enzyme catalyses a plastoquinone + NADH + (n+1) H(+)(in) = a plastoquinol + NAD(+) + n H(+)(out). It carries out the reaction a plastoquinone + NADPH + (n+1) H(+)(in) = a plastoquinol + NADP(+) + n H(+)(out). Its function is as follows. NDH-1 shuttles electrons from an unknown electron donor, via FMN and iron-sulfur (Fe-S) centers, to quinones in the respiratory and/or the photosynthetic chain. The immediate electron acceptor for the enzyme in this species is believed to be plastoquinone. Couples the redox reaction to proton translocation, and thus conserves the redox energy in a proton gradient. Cyanobacterial NDH-1 also plays a role in inorganic carbon-concentration. The chain is NAD(P)H-quinone oxidoreductase subunit J from Synechococcus sp. (strain CC9605).